The chain runs to 147 residues: Large ribosomal subunit protein bL9 (147 aa).

Belongs to the bacterial ribosomal protein bL9 family.

In terms of biological role, binds to the 23S rRNA. This chain is Large ribosomal subunit protein bL9, found in Nitratiruptor sp. (strain SB155-2).